The primary structure comprises 175 residues: Type II restriction enzyme NgoBV (175 aa).

It carries out the reaction Endonucleolytic cleavage of DNA to give specific double-stranded fragments with terminal 5'-phosphates.. In terms of biological role, a P subtype restriction enzyme that recognizes the double-stranded sequence 5'-GGNNCC-3'; the cleavage site is unknown. In Neisseria gonorrhoeae, this protein is Type II restriction enzyme NgoBV (ngoBVR).